Reading from the N-terminus, the 280-residue chain is Fructose-1,6-bisphosphatase class 1 (280 aa).

4 residues coordinate Mg(2+): glutamate 64, aspartate 83, leucine 85, and aspartate 86. Residues 86 to 89, tyrosine 189, and lysine 220 contribute to the substrate site; that span reads DGSS. Mg(2+) is bound at residue glutamate 226.

Belongs to the FBPase class 1 family. Homotetramer. Mg(2+) is required as a cofactor.

The protein resides in the cytoplasm. The enzyme catalyses beta-D-fructose 1,6-bisphosphate + H2O = beta-D-fructose 6-phosphate + phosphate. It functions in the pathway carbohydrate biosynthesis; gluconeogenesis. In Campylobacter jejuni subsp. jejuni serotype O:2 (strain ATCC 700819 / NCTC 11168), this protein is Fructose-1,6-bisphosphatase class 1.